Reading from the N-terminus, the 338-residue chain is S-adenosylmethionine:tRNA ribosyltransferase-isomerase (338 aa).

It belongs to the QueA family. In terms of assembly, monomer.

Its subcellular location is the cytoplasm. It catalyses the reaction 7-aminomethyl-7-carbaguanosine(34) in tRNA + S-adenosyl-L-methionine = epoxyqueuosine(34) in tRNA + adenine + L-methionine + 2 H(+). It functions in the pathway tRNA modification; tRNA-queuosine biosynthesis. Functionally, transfers and isomerizes the ribose moiety from AdoMet to the 7-aminomethyl group of 7-deazaguanine (preQ1-tRNA) to give epoxyqueuosine (oQ-tRNA). The chain is S-adenosylmethionine:tRNA ribosyltransferase-isomerase from Francisella tularensis subsp. holarctica (strain FTNF002-00 / FTA).